The sequence spans 297 residues: Tyrosine recombinase XerD (297 aa).

One can recognise a Core-binding (CB) domain in the interval 1–86; it reads MNDLIEDFLH…SLRSFFHYLM (86 aa). In terms of domain architecture, Tyr recombinase spans 107-291; the sequence is GLPKVLNLDD…TKLRLKDVYK (185 aa). Catalysis depends on residues arginine 147, lysine 171, histidine 243, arginine 246, and histidine 269. Catalysis depends on tyrosine 278, which acts as the O-(3'-phospho-DNA)-tyrosine intermediate.

It belongs to the 'phage' integrase family. XerD subfamily. Forms a cyclic heterotetrameric complex composed of two molecules of XerC and two molecules of XerD.

Its subcellular location is the cytoplasm. Its function is as follows. Site-specific tyrosine recombinase, which acts by catalyzing the cutting and rejoining of the recombining DNA molecules. The XerC-XerD complex is essential to convert dimers of the bacterial chromosome into monomers to permit their segregation at cell division. It also contributes to the segregational stability of plasmids. The sequence is that of Tyrosine recombinase XerD from Listeria monocytogenes serotype 4b (strain F2365).